The primary structure comprises 238 residues: Valine-rich protein (238 aa).

Positions 1–16 are cleaved as a signal peptide; the sequence is MQAVLLVVALFGAALA.

As to expression, prismatic layer of shell (at protein level). Expressed primarily in the mantle with highest level in the mantle edge and lower level in the mantle pallium.

It localises to the secreted. The chain is Valine-rich protein from Margaritifera margaritifera (Freshwater pearl mussel).